The sequence spans 164 residues: Dihydrofolate reductase (164 aa).

One can recognise a DHFR domain in the interval 2-162 (NISIIVAMSQ…FYVTFKILKK (161 aa)). 6 to 8 (IVA) contributes to the substrate binding site. Residues 7-8 (VA) and 15-20 (IGQKNS) contribute to the NADP(+) site. Residue Asp28 participates in substrate binding. 44–47 (GRKT) is an NADP(+) binding site. Arg58 lines the substrate pocket. NADP(+) is bound by residues 63–66 (LTRQ) and 96–101 (IGGSNL). Thr115 serves as a coordination point for substrate.

Belongs to the dihydrofolate reductase family.

It catalyses the reaction (6S)-5,6,7,8-tetrahydrofolate + NADP(+) = 7,8-dihydrofolate + NADPH + H(+). Its pathway is cofactor biosynthesis; tetrahydrofolate biosynthesis; 5,6,7,8-tetrahydrofolate from 7,8-dihydrofolate: step 1/1. Key enzyme in folate metabolism. Catalyzes an essential reaction for de novo glycine and purine synthesis, and for DNA precursor synthesis. The polypeptide is Dihydrofolate reductase (folA) (Buchnera aphidicola subsp. Baizongia pistaciae (strain Bp)).